Here is a 348-residue protein sequence, read N- to C-terminus: Dihydroorotase (348 aa).

Zn(2+) contacts are provided by histidine 14 and histidine 16. Substrate-binding positions include 16–18 and asparagine 42; that span reads HLR. Zn(2+) contacts are provided by lysine 100, histidine 137, and histidine 175. Residue lysine 100 is modified to N6-carboxylysine. Histidine 137 lines the substrate pocket. Leucine 220 lines the substrate pocket. Aspartate 248 serves as a coordination point for Zn(2+). Aspartate 248 is an active-site residue. Positions 252 and 264 each coordinate substrate.

It belongs to the metallo-dependent hydrolases superfamily. DHOase family. Class II DHOase subfamily. As to quaternary structure, homodimer. Requires Zn(2+) as cofactor.

The catalysed reaction is (S)-dihydroorotate + H2O = N-carbamoyl-L-aspartate + H(+). Its pathway is pyrimidine metabolism; UMP biosynthesis via de novo pathway; (S)-dihydroorotate from bicarbonate: step 3/3. Functionally, catalyzes the reversible cyclization of carbamoyl aspartate to dihydroorotate. The sequence is that of Dihydroorotase from Azotobacter vinelandii (strain DJ / ATCC BAA-1303).